Here is a 369-residue protein sequence, read N- to C-terminus: MASTPRTPAPERSPPPVPTPPPPLEDEPPPYLADGSPREEASFSSDGREGAPPKNPQLSPTHHAAPRLVPPPSSPARQDGQEQEGSANKAAAATAEPAREPLRQMATGLARPLSSQTSPATTNSPTPSASPTPSSPAPVANNSKRSGQSTPKRAETKLPLSSPAVAVHFDPVEEAVTSPLRLGKARLDQQQQQQHAAGAAESGASVVPGVAAAVAAVAERRELLLALRLATAVLSLAAFSVIASARTSGWAGDYYARHLQYRYAVAVNVIVFAYSVAQSLGKIRHLVSPRFTFRTMSSYYCSLFLDQVLAYLLMSASSAAASRNDLWVSRFGTDAFVRKITGALWLSFVAFLVLALNAVISXANLFSMV.

Residues 1-162 (MASTPRTPAP…RAETKLPLSS (162 aa)) are disordered. Over 1 to 222 (MASTPRTPAP…AVAAVAERRE (222 aa)) the chain is Cytoplasmic. A compositionally biased stretch (pro residues) spans 7-23 (TPAPERSPPPVPTPPPP). The span at 36-51 (SPREEASFSSDGREGA) shows a compositional bias: basic and acidic residues. Low complexity-rich tracts occupy residues 87–96 (ANKAAAATAE) and 114–127 (SSQT…SPTP). A helical membrane pass occupies residues 223-243 (LLLALRLATAVLSLAAFSVIA). Topologically, residues 244–262 (SARTSGWAGDYYARHLQYR) are extracellular. The chain crosses the membrane as a helical span at residues 263 to 283 (YAVAVNVIVFAYSVAQSLGKI). Residues 284 to 300 (RHLVSPRFTFRTMSSYY) are Cytoplasmic-facing. The helical transmembrane segment at 301–321 (CSLFLDQVLAYLLMSASSAAA) threads the bilayer. The Extracellular segment spans residues 322–339 (SRNDLWVSRFGTDAFVRK). A helical membrane pass occupies residues 340–360 (ITGALWLSFVAFLVLALNAVI). Residues 361–369 (SXANLFSMV) lie on the Cytoplasmic side of the membrane.

Belongs to the Casparian strip membrane proteins (CASP) family. As to quaternary structure, homodimer and heterodimers.

It is found in the cell membrane. The sequence is that of CASP-like protein 4U1 from Zea mays (Maize).